Reading from the N-terminus, the 97-residue chain is Co-chaperonin GroES (97 aa).

Belongs to the GroES chaperonin family. As to quaternary structure, heptamer of 7 subunits arranged in a ring. Interacts with the chaperonin GroEL.

It localises to the cytoplasm. In terms of biological role, together with the chaperonin GroEL, plays an essential role in assisting protein folding. The GroEL-GroES system forms a nano-cage that allows encapsulation of the non-native substrate proteins and provides a physical environment optimized to promote and accelerate protein folding. GroES binds to the apical surface of the GroEL ring, thereby capping the opening of the GroEL channel. This Pseudomonas savastanoi pv. phaseolicola (strain 1448A / Race 6) (Pseudomonas syringae pv. phaseolicola (strain 1448A / Race 6)) protein is Co-chaperonin GroES.